A 276-amino-acid chain; its full sequence is Large ribosomal subunit protein uL2 (276 aa).

2 disordered regions span residues 37-59 and 224-276; these read QFQKSGRNNNGHITTRHKGGGHK and VAMN…RHKR. Residues 50-59 show a composition bias toward basic residues; the sequence is TTRHKGGGHK.

This sequence belongs to the universal ribosomal protein uL2 family. In terms of assembly, part of the 50S ribosomal subunit. Forms a bridge to the 30S subunit in the 70S ribosome.

In terms of biological role, one of the primary rRNA binding proteins. Required for association of the 30S and 50S subunits to form the 70S ribosome, for tRNA binding and peptide bond formation. It has been suggested to have peptidyltransferase activity; this is somewhat controversial. Makes several contacts with the 16S rRNA in the 70S ribosome. The sequence is that of Large ribosomal subunit protein uL2 from Ralstonia nicotianae (strain ATCC BAA-1114 / GMI1000) (Ralstonia solanacearum).